We begin with the raw amino-acid sequence, 658 residues long: Translation factor GUF1, mitochondrial (658 aa).

Residues 1 to 40 constitute a mitochondrion transit peptide; that stretch reads MRGCLQTVRWLTSAWQRPPSYPPLSRAAPCRFFNVSIPRN. In terms of domain architecture, tr-type G spans 60–240; the sequence is DRFRNFCIVA…TVVEQIPAPV (181 aa). GTP is bound by residues 69-76, 133-137, and 187-190; these read AHVDHGKS, DTPGH, and NKVD.

It belongs to the TRAFAC class translation factor GTPase superfamily. Classic translation factor GTPase family. LepA subfamily.

It localises to the mitochondrion inner membrane. It carries out the reaction GTP + H2O = GDP + phosphate + H(+). Its function is as follows. Promotes mitochondrial protein synthesis. May act as a fidelity factor of the translation reaction, by catalyzing a one-codon backward translocation of tRNAs on improperly translocated ribosomes. Binds to mitochondrial ribosomes in a GTP-dependent manner. In Paracoccidioides brasiliensis (strain Pb03), this protein is Translation factor GUF1, mitochondrial.